Consider the following 406-residue polypeptide: S-adenosylmethionine synthase (406 aa).

ATP is bound at residue 141-146 (GQGSMD).

Belongs to the AdoMet synthase 2 family. In terms of assembly, homodimer. Mg(2+) serves as cofactor.

It carries out the reaction L-methionine + ATP + H2O = S-adenosyl-L-methionine + phosphate + diphosphate. It functions in the pathway amino-acid biosynthesis; S-adenosyl-L-methionine biosynthesis; S-adenosyl-L-methionine from L-methionine: step 1/1. In terms of biological role, catalyzes the formation of S-adenosylmethionine from methionine and ATP. In Methanocaldococcus jannaschii (strain ATCC 43067 / DSM 2661 / JAL-1 / JCM 10045 / NBRC 100440) (Methanococcus jannaschii), this protein is S-adenosylmethionine synthase (mat).